A 73-amino-acid polypeptide reads, in one-letter code: Alpha-bungarotoxin N3 (73 aa).

Intrachain disulfides connect Cys3/Cys23, Cys16/Cys43, Cys28/Cys32, Cys47/Cys58, and Cys59/Cys64.

Belongs to the three-finger toxin family. Long-chain subfamily. Type II alpha-neurotoxin sub-subfamily. Monomer in solution, homodimer in crystal state. Expressed by the venom gland.

The protein localises to the secreted. Functionally, binds with high affinity to muscular (alpha-1/CHRNA1) and neuronal (alpha-7/CHRNA7) nicotinic acetylcholine receptor (nAChR) and inhibits acetylcholine from binding to the receptor, thereby impairing neuromuscular and neuronal transmission. Mice injected with this toxin develop flaccid paralysis followed by death. Irreversibly inhibits twitches in a concentration-dependent manner in rat phrenic nerve-hemidiaphragm and chick biventer cervicis muscle. This chain is Alpha-bungarotoxin N3, found in Bungarus candidus (Malayan krait).